A 139-amino-acid chain; its full sequence is ATP synthase epsilon chain (139 aa).

This sequence belongs to the ATPase epsilon chain family. As to quaternary structure, F-type ATPases have 2 components, CF(1) - the catalytic core - and CF(0) - the membrane proton channel. CF(1) has five subunits: alpha(3), beta(3), gamma(1), delta(1), epsilon(1). CF(0) has three main subunits: a, b and c.

Its subcellular location is the cell membrane. Its function is as follows. Produces ATP from ADP in the presence of a proton gradient across the membrane. This is ATP synthase epsilon chain from Streptococcus sanguinis.